Consider the following 596-residue polypeptide: uncharacterized protein (596 aa).

The helical transmembrane segment at 7-26 (FWPILLGFTVLVAAGLYYVV) threads the bilayer.

Its subcellular location is the membrane. This is an uncharacterized protein from Sinorhizobium fredii (strain NBRC 101917 / NGR234).